A 194-amino-acid chain; its full sequence is Imidazole glycerol phosphate synthase subunit HisH (194 aa).

In terms of domain architecture, Glutamine amidotransferase type-1 spans 1 to 194 (MIIIDTGCAN…QLLKNFVENL (194 aa)). Cysteine 75 functions as the Nucleophile in the catalytic mechanism. Residues histidine 175 and glutamate 177 contribute to the active site.

Heterodimer of HisH and HisF.

The protein localises to the cytoplasm. The enzyme catalyses 5-[(5-phospho-1-deoxy-D-ribulos-1-ylimino)methylamino]-1-(5-phospho-beta-D-ribosyl)imidazole-4-carboxamide + L-glutamine = D-erythro-1-(imidazol-4-yl)glycerol 3-phosphate + 5-amino-1-(5-phospho-beta-D-ribosyl)imidazole-4-carboxamide + L-glutamate + H(+). It catalyses the reaction L-glutamine + H2O = L-glutamate + NH4(+). The protein operates within amino-acid biosynthesis; L-histidine biosynthesis; L-histidine from 5-phospho-alpha-D-ribose 1-diphosphate: step 5/9. Its function is as follows. IGPS catalyzes the conversion of PRFAR and glutamine to IGP, AICAR and glutamate. The HisH subunit catalyzes the hydrolysis of glutamine to glutamate and ammonia as part of the synthesis of IGP and AICAR. The resulting ammonia molecule is channeled to the active site of HisF. The chain is Imidazole glycerol phosphate synthase subunit HisH from Mannheimia succiniciproducens (strain KCTC 0769BP / MBEL55E).